The primary structure comprises 322 residues: HPr kinase/phosphorylase (322 aa).

Active-site residues include H146 and K167. 161–168 serves as a coordination point for ATP; it reads GDSGLGKS. Mg(2+) is bound at residue S168. D185 functions as the Proton acceptor; for phosphorylation activity. Proton donor; for dephosphorylation activity in the catalytic mechanism. Residues 209-218 are important for the catalytic mechanism of both phosphorylation and dephosphorylation; it reads LEVRGLGLLD. E210 contributes to the Mg(2+) binding site. R250 is a catalytic residue. The interval 271–276 is important for the catalytic mechanism of dephosphorylation; sequence QVAAGR.

This sequence belongs to the HPrK/P family. In terms of assembly, homohexamer. Mg(2+) is required as a cofactor.

It catalyses the reaction [HPr protein]-L-serine + ATP = [HPr protein]-O-phospho-L-serine + ADP + H(+). The enzyme catalyses [HPr protein]-O-phospho-L-serine + phosphate + H(+) = [HPr protein]-L-serine + diphosphate. In terms of biological role, catalyzes the ATP- as well as the pyrophosphate-dependent phosphorylation of a specific serine residue in HPr, a phosphocarrier protein of the phosphoenolpyruvate-dependent sugar phosphotransferase system (PTS). HprK/P also catalyzes the pyrophosphate-producing, inorganic phosphate-dependent dephosphorylation (phosphorolysis) of seryl-phosphorylated HPr (P-Ser-HPr). The sequence is that of HPr kinase/phosphorylase from Paraburkholderia phytofirmans (strain DSM 17436 / LMG 22146 / PsJN) (Burkholderia phytofirmans).